Consider the following 231-residue polypeptide: 7-cyano-7-deazaguanine synthase (231 aa).

Residue 8–18 (FSGGQDSTTCL) coordinates ATP. Cysteine 188, cysteine 197, cysteine 200, and cysteine 203 together coordinate Zn(2+).

This sequence belongs to the QueC family. The cofactor is Zn(2+).

It carries out the reaction 7-carboxy-7-deazaguanine + NH4(+) + ATP = 7-cyano-7-deazaguanine + ADP + phosphate + H2O + H(+). It participates in purine metabolism; 7-cyano-7-deazaguanine biosynthesis. Its function is as follows. Catalyzes the ATP-dependent conversion of 7-carboxy-7-deazaguanine (CDG) to 7-cyano-7-deazaguanine (preQ(0)). This chain is 7-cyano-7-deazaguanine synthase, found in Escherichia coli O1:K1 / APEC.